A 485-amino-acid polypeptide reads, in one-letter code: WD repeat-containing protein 13 (485 aa).

Residues S70, S74, and S79 each carry the phosphoserine modification. An Asymmetric dimethylarginine; alternate modification is found at R114. The residue at position 114 (R114) is an Omega-N-methylarginine; alternate. WD repeat units lie at residues 170 to 210 (HVDE…PTVL), 215 to 254 (GHTRGVSDFAWSLSNDILVSTSLDATMRIWASEDGRCIRE), 302 to 341 (KLTGRVLALSFDAPGRLLWAGDDRGSVFSFLFDMATGKLT), 406 to 446 (HPVR…KAAV), and 451 to 484 (GHSAPVLDVSFNCDESLLASSDASGMVIVWRREQ).

Its subcellular location is the nucleus. The polypeptide is WD repeat-containing protein 13 (WDR13) (Pongo abelii (Sumatran orangutan)).